Here is a 332-residue protein sequence, read N- to C-terminus: Glycerol-3-phosphate dehydrogenase [NAD(P)+] (332 aa).

NADPH contacts are provided by serine 11, tryptophan 12, arginine 32, arginine 33, and lysine 106. Residues lysine 106 and glycine 136 each coordinate sn-glycerol 3-phosphate. Alanine 140 provides a ligand contact to NADPH. Residues lysine 191, aspartate 244, serine 254, arginine 255, and asparagine 256 each contribute to the sn-glycerol 3-phosphate site. The Proton acceptor role is filled by lysine 191. Residue arginine 255 coordinates NADPH. NADPH-binding residues include valine 280 and glutamate 282.

It belongs to the NAD-dependent glycerol-3-phosphate dehydrogenase family.

It is found in the cytoplasm. It catalyses the reaction sn-glycerol 3-phosphate + NAD(+) = dihydroxyacetone phosphate + NADH + H(+). It carries out the reaction sn-glycerol 3-phosphate + NADP(+) = dihydroxyacetone phosphate + NADPH + H(+). It functions in the pathway membrane lipid metabolism; glycerophospholipid metabolism. Catalyzes the reduction of the glycolytic intermediate dihydroxyacetone phosphate (DHAP) to sn-glycerol 3-phosphate (G3P), the key precursor for phospholipid synthesis. In Corynebacterium glutamicum (strain R), this protein is Glycerol-3-phosphate dehydrogenase [NAD(P)+].